The primary structure comprises 431 residues: Glutamate--tRNA ligase 1 (431 aa).

Residues 11–21 (PSPTGDLHLGG) carry the 'HIGH' region motif. The short motif at 203-207 (KLSKR) is the 'KMSKS' region element. Lysine 206 contacts ATP.

Belongs to the class-I aminoacyl-tRNA synthetase family. Glutamate--tRNA ligase type 1 subfamily. Monomer.

It is found in the cytoplasm. It carries out the reaction tRNA(Glu) + L-glutamate + ATP = L-glutamyl-tRNA(Glu) + AMP + diphosphate. Catalyzes the attachment of glutamate to tRNA(Glu) in a two-step reaction: glutamate is first activated by ATP to form Glu-AMP and then transferred to the acceptor end of tRNA(Glu). The polypeptide is Glutamate--tRNA ligase 1 (Rubrobacter xylanophilus (strain DSM 9941 / JCM 11954 / NBRC 16129 / PRD-1)).